A 349-amino-acid polypeptide reads, in one-letter code: Divinyl chlorophyll a/b light-harvesting protein PcbA (349 aa).

Helical transmembrane passes span phenylalanine 27–leucine 47, valine 57–phenylalanine 77, valine 89–methionine 109, valine 202–alanine 222, alanine 242–serine 262, and leucine 304–leucine 324.

This sequence belongs to the PsbB/PsbC family. IsiA/Pcb subfamily. As to quaternary structure, the antenna complex consists of divinyl chlorophylls (a and b) and divinyl chlorophyll a/b binding proteins and binds more divinyl chlorophyll b than does the antenna complex from high-light-adapted Prochlorococcus. It depends on divinyl chlorophyll a as a cofactor. The cofactor is divinyl chlorophyll b.

It localises to the cellular thylakoid membrane. In terms of biological role, the antenna complex functions as a light receptor, it captures and delivers excitation energy to photosystems II and I. The Prochlorales pcb genes are not related to higher plant LHCs. The protein is Divinyl chlorophyll a/b light-harvesting protein PcbA (pcbA) of Prochlorococcus marinus (strain NATL2A).